We begin with the raw amino-acid sequence, 217 residues long: Pyridoxine/pyridoxamine 5'-phosphate oxidase (217 aa).

Residues 66–71 (RMVLLK), 81–82 (FT), R87, K88, and Q110 each bind FMN. K71 serves as a coordination point for substrate. Substrate is bound by residues Y128, R132, and S136. FMN is bound by residues 145 to 146 (QS) and W190. 196-198 (RLH) contributes to the substrate binding site. R200 serves as a coordination point for FMN.

Belongs to the pyridoxamine 5'-phosphate oxidase family. In terms of assembly, homodimer. FMN serves as cofactor.

It carries out the reaction pyridoxamine 5'-phosphate + O2 + H2O = pyridoxal 5'-phosphate + H2O2 + NH4(+). It catalyses the reaction pyridoxine 5'-phosphate + O2 = pyridoxal 5'-phosphate + H2O2. It participates in cofactor metabolism; pyridoxal 5'-phosphate salvage; pyridoxal 5'-phosphate from pyridoxamine 5'-phosphate: step 1/1. It functions in the pathway cofactor metabolism; pyridoxal 5'-phosphate salvage; pyridoxal 5'-phosphate from pyridoxine 5'-phosphate: step 1/1. Its function is as follows. Catalyzes the oxidation of either pyridoxine 5'-phosphate (PNP) or pyridoxamine 5'-phosphate (PMP) into pyridoxal 5'-phosphate (PLP). The polypeptide is Pyridoxine/pyridoxamine 5'-phosphate oxidase (Colwellia psychrerythraea (strain 34H / ATCC BAA-681) (Vibrio psychroerythus)).